A 100-amino-acid chain; its full sequence is Urease subunit gamma 1 (100 aa).

This sequence belongs to the urease gamma subunit family. As to quaternary structure, heterotrimer of UreA (gamma), UreB (beta) and UreC (alpha) subunits. Three heterotrimers associate to form the active enzyme.

It is found in the cytoplasm. The enzyme catalyses urea + 2 H2O + H(+) = hydrogencarbonate + 2 NH4(+). It functions in the pathway nitrogen metabolism; urea degradation; CO(2) and NH(3) from urea (urease route): step 1/1. Disruption of the ure1 gene cluster suggests that it protects brucellae during their passage through the stomach. The major route of infection in human brucellosis is oral. This Brucella abortus (strain 2308) protein is Urease subunit gamma 1.